Here is a 612-residue protein sequence, read N- to C-terminus: RNA-binding protein MRN1 (612 aa).

Positions methionine 1–asparagine 28 are enriched in low complexity. Disordered regions lie at residues methionine 1–serine 57 and proline 105–glutamine 125. Composition is skewed to polar residues over residues tyrosine 42–serine 57 and aspartate 115–glutamine 125. RRM domains follow at residues arginine 201–proline 274, arginine 292–glutamine 379, arginine 431–histidine 504, and arginine 522–aspartate 602.

It localises to the cytoplasm. In terms of biological role, RNA-binding protein that binds specific categories of mRNAs, including those that contain upstream open reading frames (uORFs) and internal ribosome entry sites (IRES). Probably involved in translational regulation. The polypeptide is RNA-binding protein MRN1 (MRN1) (Saccharomyces cerevisiae (strain ATCC 204508 / S288c) (Baker's yeast)).